Consider the following 198-residue polypeptide: Acyl carrier protein phosphodiesterase (198 aa).

The protein belongs to the AcpH family.

It catalyses the reaction holo-[ACP] + H2O = apo-[ACP] + (R)-4'-phosphopantetheine + H(+). Its function is as follows. Converts holo-ACP to apo-ACP by hydrolytic cleavage of the phosphopantetheine prosthetic group from ACP. The protein is Acyl carrier protein phosphodiesterase of Photorhabdus laumondii subsp. laumondii (strain DSM 15139 / CIP 105565 / TT01) (Photorhabdus luminescens subsp. laumondii).